The primary structure comprises 196 residues: Rho-related protein racL (196 aa).

Position 10–17 (10–17 (GDGAVGKT)) interacts with GTP. The short motif at 32–40 (YQPTVFDNF) is the Effector region element. GTP is bound by residues 57-61 (DTAGQ) and 116-119 (TQND). C193 is subject to Cysteine methyl ester. Residue C193 is the site of S-geranylgeranyl cysteine attachment. A propeptide spans 194–196 (IIL) (removed in mature form).

This sequence belongs to the small GTPase superfamily. Rho family.

Its subcellular location is the cell membrane. This Dictyostelium discoideum (Social amoeba) protein is Rho-related protein racL (racL).